Consider the following 584-residue polypeptide: Keratin, type I cytoskeletal 10 (584 aa).

Low complexity predominate over residues Met1–Arg15. The disordered stretch occupies residues Met1–Gly24. Residues Met1–Asn145 are head. A phosphoserine mark is found at Ser14, Ser16, Ser42, Ser53, Ser56, and Ser170. The coil 1A stretch occupies residues Glu146 to Trp181. The IF rod domain maps to Glu146–Gly460. The interval Tyr182–Thr202 is linker 1. A coil 1B region spans residues Ile203 to Leu294. The linker 12 stretch occupies residues Arg295–Leu317. A coil 2 region spans residues Leu318–Glu456. The segment at Leu453–Tyr584 is disordered. A compositionally biased stretch (gly residues) spans Gly457 to Ser563. Residues Gly457–Tyr584 form a tail region. Residues Gly564–Tyr584 show a composition bias toward low complexity.

Belongs to the intermediate filament family. In terms of assembly, heterotetramer of two type I and two type II keratins. Heterodimer with KRT1. Two heterodimers of KRT1 and KRT10 form a heterotetramer. The KRT10 subunit in the heterotetramer is probably disulfide-linked. Interacts with PLEC isoform 1C, when in a heterodimer with KRT1. (Microbial infection) Interacts (via C-terminal tail domain) with the S.aureus clumping factor, clfB; this interaction probably mediates S.aureus attachment to the keratinized squamous epithelial cells from the nasal cavity. As to quaternary structure, (Microbial infection) Interacts (via the C-terminal tail domain) with S.pneumoniae serine-rich repeat protein PsrP; this interaction probably mediates S.pneumoniae adherence to lung tissue and subsequent pathogenesis. Neither protein has to be glycosylated for the interaction to occur. In terms of tissue distribution, seen in all suprabasal cell layers including stratum corneum. Expressed on the surface of lung cell lines. Localized on the surface of desquamated nasal epithelial cells (at protein level).

Its subcellular location is the secreted. It localises to the extracellular space. The protein localises to the cell surface. It is found in the cytoplasm. Plays a role in the establishment of the epidermal barrier on plantar skin. Involved in the maintenance of cell layer development and keratin filament bundles in suprabasal cells of the epithelium. Functionally, (Microbial infection) Acts as a mediator of S.aureus adherence to desquamated nasal epithelial cells via clfB, and hence may play a role in nasal colonization. Its function is as follows. (Microbial infection) Binds S.pneumoniae PsrP, mediating adherence of the bacteria to lung cell lines. Reduction of levels of KRT10 keratin decrease adherence, overexpression increases adherence. Neither protein has to be glycosylated for the interaction to occur. The protein is Keratin, type I cytoskeletal 10 (KRT10) of Homo sapiens (Human).